A 170-amino-acid chain; its full sequence is MPTSWKDSGLRWYWIVVLVFIADQLSKQWVLSSFELYESVKLLPMFNFTYVRNYGAAFSFLSDAGGWQRWLFTFVAVGFSILLSVWLRQQSTKMWRLNLAYTLVIGGALGNLIDRLQHGFVVDFLDFYWKTSHFPAFNIADSAICIGAGLIILDSFVSGKDVKKSDDIKE.

3 helical membrane passes run 12–32 (WYWI…WVLS), 67–87 (WQRW…SVWL), and 94–113 (MWRL…GNLI). Catalysis depends on residues Asp123 and Asp141. The helical transmembrane segment at 133–153 (HFPAFNIADSAICIGAGLIIL) threads the bilayer.

This sequence belongs to the peptidase A8 family.

It is found in the cell inner membrane. The enzyme catalyses Release of signal peptides from bacterial membrane prolipoproteins. Hydrolyzes -Xaa-Yaa-Zaa-|-(S,diacylglyceryl)Cys-, in which Xaa is hydrophobic (preferably Leu), and Yaa (Ala or Ser) and Zaa (Gly or Ala) have small, neutral side chains.. Its pathway is protein modification; lipoprotein biosynthesis (signal peptide cleavage). In terms of biological role, this protein specifically catalyzes the removal of signal peptides from prolipoproteins. This is Lipoprotein signal peptidase from Shewanella piezotolerans (strain WP3 / JCM 13877).